Reading from the N-terminus, the 242-residue chain is Phosphate import ATP-binding protein PstB 1 (242 aa).

The ABC transporter domain occupies 1–237 (MDLYYGSYRA…PKDQRTEDYI (237 aa)). 28-35 (GPSGCGKS) serves as a coordination point for ATP.

Belongs to the ABC transporter superfamily. Phosphate importer (TC 3.A.1.7) family. As to quaternary structure, the complex is composed of two ATP-binding proteins (PstB), two transmembrane proteins (PstC and PstA) and a solute-binding protein (PstS).

Its subcellular location is the cell membrane. It catalyses the reaction phosphate(out) + ATP + H2O = ADP + 2 phosphate(in) + H(+). Functionally, part of the ABC transporter complex PstSACB involved in phosphate import. Responsible for energy coupling to the transport system. The protein is Phosphate import ATP-binding protein PstB 1 of Symbiobacterium thermophilum (strain DSM 24528 / JCM 14929 / IAM 14863 / T).